A 341-amino-acid chain; its full sequence is L-threonine 3-dehydrogenase (341 aa).

Position 38 (cysteine 38) interacts with Zn(2+). Active-site charge relay system residues include threonine 40 and histidine 43. The Zn(2+) site is built by histidine 63, glutamate 64, cysteine 93, cysteine 96, cysteine 99, and cysteine 107. NAD(+) is bound by residues isoleucine 175, aspartate 195, arginine 200, 262–264 (LGI), and 286–287 (IY).

This sequence belongs to the zinc-containing alcohol dehydrogenase family. In terms of assembly, homotetramer. It depends on Zn(2+) as a cofactor.

It is found in the cytoplasm. It carries out the reaction L-threonine + NAD(+) = (2S)-2-amino-3-oxobutanoate + NADH + H(+). Its pathway is amino-acid degradation; L-threonine degradation via oxydo-reductase pathway; glycine from L-threonine: step 1/2. Its function is as follows. Catalyzes the NAD(+)-dependent oxidation of L-threonine to 2-amino-3-ketobutyrate. The chain is L-threonine 3-dehydrogenase from Shewanella baltica (strain OS223).